The following is a 390-amino-acid chain: Coiled-coil domain-containing protein 85C (390 aa).

2 coiled-coil regions span residues 26-86 (KEEL…RELC) and 116-146 (KEVGTYQQKLKELEAKQESLVRDNLELKEII). The tract at residues 153–237 (RNGPGSRSSI…RSIPNGLNDS (85 aa)) is disordered. The segment covering 157–172 (GSRSSIDSQNSLTNLN) has biased composition (polar residues). Over residues 182-194 (DGSSTSSTGSAGS) the composition is skewed to low complexity.

This sequence belongs to the CCDC85 family.

The protein localises to the cell junction. The protein resides in the tight junction. It localises to the adherens junction. May play a role in cell-cell adhesion and epithelium development. May play an important role in cortical development, especially in the maintenance of radial glia. In Xenopus laevis (African clawed frog), this protein is Coiled-coil domain-containing protein 85C (ccdc85c).